Consider the following 228-residue polypeptide: Homeobox protein Hox-B6a (228 aa).

The Antp-type hexapeptide signature appears at 132 to 137; that stretch reads VYPWMQ. Residues 150–209 constitute a DNA-binding region (homeobox); sequence GRRGRQTYTRYQTLELEKEFHFNRYLTRRRRIEIAHALCLTERQIKIWFQNRRMKWKKEN.

Belongs to the Antp homeobox family.

Its subcellular location is the nucleus. Functionally, sequence-specific transcription factor which is part of a developmental regulatory system that provides cells with specific positional identities on the anterior-posterior axis. This Danio rerio (Zebrafish) protein is Homeobox protein Hox-B6a (hoxb6a).